The chain runs to 826 residues: Zinc phosphodiesterase ELAC protein 2 (826 aa).

The transit peptide at 1–16 (MWALCSLLRSAAGRTM) directs the protein to the mitochondrion. 2 disordered regions span residues 16–51 (MSQGRTISQAPARRERPRKDPLRHLRTREKRGPSGC) and 188–231 (EQRR…VSQR). Residues 27 to 38 (ARRERPRKDPLR) are compositionally biased toward basic and acidic residues. Ser199, Ser208, Ser212, Ser229, Ser618, and Ser736 each carry phosphoserine. Basic and acidic residues predominate over residues 208 to 224 (SPERSSDSESNENEPHL). Residues 798-826 (ELAGGLEDGEPQQKRAHTEEPQAKKVRAQ) are disordered. A compositionally biased stretch (basic and acidic residues) spans 808 to 820 (PQQKRAHTEEPQA).

This sequence belongs to the RNase Z family. Homodimer. Interacts with PTCD1. Zn(2+) is required as a cofactor. Widely expressed. Highly expressed in heart, placenta, liver, skeletal muscle, kidney, pancreas, testis and ovary. Weakly expressed in brain, lung, spleen, thymus, prostate, small intestine, colon and leukocytes.

The protein localises to the mitochondrion. It localises to the mitochondrion matrix. The protein resides in the mitochondrion nucleoid. Its subcellular location is the nucleus. It catalyses the reaction Endonucleolytic cleavage of RNA, removing extra 3' nucleotides from tRNA precursor, generating 3' termini of tRNAs. A 3'-hydroxy group is left at the tRNA terminus and a 5'-phosphoryl group is left at the trailer molecule.. Its function is as follows. Zinc phosphodiesterase, which displays mitochondrial tRNA 3'-processing endonuclease activity. Involved in tRNA maturation, by removing a 3'-trailer from precursor tRNA. Associates with mitochondrial DNA complexes at the nucleoids to initiate RNA processing and ribosome assembly. The sequence is that of Zinc phosphodiesterase ELAC protein 2 (ELAC2) from Homo sapiens (Human).